The chain runs to 283 residues: Formamidopyrimidine-DNA glycosylase (283 aa).

Catalysis depends on Pro-2, which acts as the Schiff-base intermediate with DNA. The active-site Proton donor is Glu-3. The active-site Proton donor; for beta-elimination activity is Lys-61. Residues His-94, Arg-113, and Lys-159 each coordinate DNA. The FPG-type zinc finger occupies 245–279; it reads DAYGREGESCRRCGAVMRREKFMNRSSFYCPKCQP. Arg-269 serves as the catalytic Proton donor; for delta-elimination activity.

This sequence belongs to the FPG family. In terms of assembly, monomer. Zn(2+) serves as cofactor.

It catalyses the reaction Hydrolysis of DNA containing ring-opened 7-methylguanine residues, releasing 2,6-diamino-4-hydroxy-5-(N-methyl)formamidopyrimidine.. It carries out the reaction 2'-deoxyribonucleotide-(2'-deoxyribose 5'-phosphate)-2'-deoxyribonucleotide-DNA = a 3'-end 2'-deoxyribonucleotide-(2,3-dehydro-2,3-deoxyribose 5'-phosphate)-DNA + a 5'-end 5'-phospho-2'-deoxyribonucleoside-DNA + H(+). Functionally, involved in base excision repair of DNA damaged by oxidation or by mutagenic agents. Acts as a DNA glycosylase that recognizes and removes damaged bases. Has a preference for oxidized purines, such as 7,8-dihydro-8-oxoguanine (8-oxoG). Has AP (apurinic/apyrimidinic) lyase activity and introduces nicks in the DNA strand. Cleaves the DNA backbone by beta-delta elimination to generate a single-strand break at the site of the removed base with both 3'- and 5'-phosphates. The protein is Formamidopyrimidine-DNA glycosylase of Mycolicibacterium paratuberculosis (strain ATCC BAA-968 / K-10) (Mycobacterium paratuberculosis).